Reading from the N-terminus, the 367-residue chain is Carbamoyl-phosphate synthase (367 aa).

The 186-residue stretch at 111 to 296 (KEFYNEIGVP…SLCELVNMAA (186 aa)) folds into the ATP-grasp domain. Residue 137–186 (KMEFPVVLKQGQGQGGKDIKVAESLDDVKEYFEEFDHALCEKFIEGSEIS) coordinates ATP. Positions 253, 267, and 269 each coordinate Mg(2+). Mn(2+) contacts are provided by aspartate 253, glutamate 267, and asparagine 269.

This sequence belongs to the small carbamoyl-phosphate synthase family. In terms of assembly, forms homodimers and homotetramers (dimers of dimers). Requires Mg(2+) as cofactor. The cofactor is Mn(2+).

It carries out the reaction hydrogencarbonate + NH4(+) + 2 ATP = carbamoyl phosphate + 2 ADP + phosphate + 2 H(+). Its function is as follows. Catalyzes the synthesis of carbamoyl phosphate from ATP, ammonium and bicarbonate. Proceeds via a three-step mechanism, i.e. the phosphorylation of hydrogencarbonate to carboxyphosphate, a nucleophilic attack of ammonia on carboxyphosphate yielding carbamate, and the phosphorylation of carbamate forming carbamoyl phosphate. In M.smithii, the predominant archaeon in the human gut, one function of this enzyme may be to sequester ammonia, a scarce nutrient in the intestine which is the major source of nitrogen in M.smithii for the biosynthesis of nucleotides, amino acids, and many other metabolites. This is Carbamoyl-phosphate synthase from Methanobrevibacter smithii (strain ATCC 35061 / DSM 861 / OCM 144 / PS).